The sequence spans 329 residues: Phenylalanine--tRNA ligase alpha subunit (329 aa).

The protein belongs to the class-II aminoacyl-tRNA synthetase family. Phe-tRNA synthetase alpha subunit type 1 subfamily. In terms of assembly, tetramer of two alpha and two beta subunits. It depends on Mg(2+) as a cofactor.

The protein resides in the cytoplasm. The enzyme catalyses tRNA(Phe) + L-phenylalanine + ATP = L-phenylalanyl-tRNA(Phe) + AMP + diphosphate + H(+). This chain is Phenylalanine--tRNA ligase alpha subunit (pheS), found in Buchnera aphidicola subsp. Schizaphis graminum (strain Sg).